The sequence spans 270 residues: Imidazole glycerol phosphate synthase subunit HisF (270 aa).

Catalysis depends on residues D11 and D135.

It belongs to the HisA/HisF family. In terms of assembly, heterodimer of HisH and HisF.

It localises to the cytoplasm. The catalysed reaction is 5-[(5-phospho-1-deoxy-D-ribulos-1-ylimino)methylamino]-1-(5-phospho-beta-D-ribosyl)imidazole-4-carboxamide + L-glutamine = D-erythro-1-(imidazol-4-yl)glycerol 3-phosphate + 5-amino-1-(5-phospho-beta-D-ribosyl)imidazole-4-carboxamide + L-glutamate + H(+). It participates in amino-acid biosynthesis; L-histidine biosynthesis; L-histidine from 5-phospho-alpha-D-ribose 1-diphosphate: step 5/9. In terms of biological role, IGPS catalyzes the conversion of PRFAR and glutamine to IGP, AICAR and glutamate. The HisF subunit catalyzes the cyclization activity that produces IGP and AICAR from PRFAR using the ammonia provided by the HisH subunit. The polypeptide is Imidazole glycerol phosphate synthase subunit HisF (Haloquadratum walsbyi (strain DSM 16790 / HBSQ001)).